The sequence spans 119 residues: Immunoglobulin heavy variable 3-73 (119 aa).

A signal peptide spans 1–19 (MEFGLSWVFLVAILKGVQC). A framework-1 region spans residues 20–44 (EVQLVESGGGLVQPGGSLKLSCAAS). In terms of domain architecture, Ig-like spans 20–119 (EVQLVESGGG…EDTAVYYCTR (100 aa)). An intrachain disulfide couples Cys-41 to Cys-117. A complementarity-determining-1 region spans residues 45 to 52 (GFTFSGSA). Residues 53–69 (MHWVRQASGKGLEWVGR) form a framework-2 region. Positions 70-79 (IRSKANSYAT) are complementarity-determining-2. Positions 80 to 117 (AYAASVKGRFTISRDDSKNTAYLQMNSLKTEDTAVYYC) are framework-3. Residues 118–119 (TR) are complementarity-determining-3.

Immunoglobulins are composed of two identical heavy chains and two identical light chains; disulfide-linked.

Its subcellular location is the secreted. It localises to the cell membrane. V region of the variable domain of immunoglobulin heavy chains that participates in the antigen recognition. Immunoglobulins, also known as antibodies, are membrane-bound or secreted glycoproteins produced by B lymphocytes. In the recognition phase of humoral immunity, the membrane-bound immunoglobulins serve as receptors which, upon binding of a specific antigen, trigger the clonal expansion and differentiation of B lymphocytes into immunoglobulins-secreting plasma cells. Secreted immunoglobulins mediate the effector phase of humoral immunity, which results in the elimination of bound antigens. The antigen binding site is formed by the variable domain of one heavy chain, together with that of its associated light chain. Thus, each immunoglobulin has two antigen binding sites with remarkable affinity for a particular antigen. The variable domains are assembled by a process called V-(D)-J rearrangement and can then be subjected to somatic hypermutations which, after exposure to antigen and selection, allow affinity maturation for a particular antigen. The protein is Immunoglobulin heavy variable 3-73 of Homo sapiens (Human).